A 653-amino-acid chain; its full sequence is Polyadenylate-binding protein, cytoplasmic and nuclear (653 aa).

Over residues 1-10 (MPSTDLKKQA) the composition is skewed to basic and acidic residues. Residues 1–77 (MPSTDLKKQA…SVATPSGTAP (77 aa)) form a disordered region. The segment covering 17–27 (DVNTNNEAVES) has biased composition (polar residues). Positions 53–68 (AAEPSESTSTPTNASS) are enriched in low complexity. The RRM 1 domain maps to 80–158 (ASLYVGELDP…RPCRIMWSQR (79 aa)). Residue Thr-167 is modified to Phosphothreonine. 3 RRM domains span residues 168 to 245 (GNVF…HHVS), 261 to 338 (TNVY…RAQK), and 364 to 441 (VNLF…LAQR). The 78-residue stretch at 569–646 (PERFTAADLA…AIGVLQEFVD (78 aa)) folds into the PABC domain.

The protein belongs to the polyadenylate-binding protein type-1 family. Interacts with cid13.

Its subcellular location is the cytoplasm. It is found in the nucleus. Functionally, binds the poly(A) tail of mRNA. Appears to be an important mediator of the multiple roles of the poly(A) tail in mRNA biogenesis, stability and translation. In the nucleus, involved in both mRNA cleavage and polyadenylation. Is also required for efficient mRNA export to the cytoplasm. Acts in concert with a poly(A)-specific nuclease (PAN) to affect poly(A) tail shortening, which may occur concomitantly with either nucleocytoplasmic mRNA transport or translational initiation. In the cytoplasm, stimulates translation initiation and regulates mRNA decay through translation termination-coupled poly(A) shortening, probably mediated by PAN. The sequence is that of Polyadenylate-binding protein, cytoplasmic and nuclear (pab1) from Schizosaccharomyces pombe (strain 972 / ATCC 24843) (Fission yeast).